The following is a 1072-amino-acid chain: PWWP domain-containing protein 1 (1072 aa).

The disordered stretch occupies residues 21-133; the sequence is DSIQDPKVTP…ADEKELDLGL (113 aa). Over residues 25-38 the composition is skewed to low complexity; it reads DPKVTPDDTVVDSS. The segment covering 66–77 has biased composition (basic and acidic residues); that stretch reads RVLESERSEKDG. Positions 96–128 are enriched in acidic residues; sequence KDDESSEVKEEEEEEDGSDDQSSELGSEADEKE. In terms of domain architecture, PWWP spans 173–234; sequence VGDLVWGKVK…PAELIPFEPN (62 aa). Positions 365–387 are disordered; it reads KSPRSSVSTLEPHNRAPPRAPLS. Polar residues predominate over residues 366 to 375; that stretch reads SPRSSVSTLE. Positions 402–409 match the Nuclear localization signal 1 motif; sequence SKKPTKVK. 4 disordered regions span residues 486–619, 681–738, 871–931, and 944–973; these read AIPG…GEAG, LSVS…KTNQ, KAEP…NGNR, and ENSS…SSSV. Residues 498–526 are compositionally biased toward basic and acidic residues; it reads SLDEEKGLAEKSKERMEERAAVLPEHGKS. The segment covering 545-568 has biased composition (polar residues); sequence AGSSLQPLLESHTSASEGKSSTGS. 3 short sequence motifs (nuclear localization signal) span residues 596 to 603, 705 to 712, and 733 to 740; these read KKKKKEPD, VKRTEDPS, and LKKTNQLK. Positions 706-729 are enriched in basic and acidic residues; that stretch reads KRTEDPSKAGKKRLSSDRQDEIPS. Over residues 871–880 the composition is skewed to basic and acidic residues; that stretch reads KAEPREPENT. Residues 897 to 906 are compositionally biased toward pro residues; the sequence is LHQPTLPPPN. Over residues 921-930 the composition is skewed to low complexity; that stretch reads SSSSNNGNGN. A compositionally biased stretch (polar residues) spans 947–966; that stretch reads SKANTEPPQVTMTLNRNSGP.

It belongs to the PDP family. In terms of assembly, interacts with MSI4/FVE. Component of the PRC2 (polycomb repressive complex 2) complex which regulates histone methylation on histone H3K27.

It is found in the nucleus. Together with PDP2, PDP3 and PDP6, interacts with MSI4/FVE and MSI5 to suppress FLC, MAF4 and MAF5 expression by regulating the function of the PRC2 complex and modulating H3K27me3 level, thereby promoting flowering. The protein is PWWP domain-containing protein 1 of Arabidopsis thaliana (Mouse-ear cress).